The sequence spans 193 residues: ATP-dependent Clp protease proteolytic subunit 1 (193 aa).

Ser-98 functions as the Nucleophile in the catalytic mechanism. The active site involves His-123.

The protein belongs to the peptidase S14 family. Fourteen ClpP subunits assemble into 2 heptameric rings which stack back to back to give a disk-like structure with a central cavity, resembling the structure of eukaryotic proteasomes.

The protein localises to the cytoplasm. The catalysed reaction is Hydrolysis of proteins to small peptides in the presence of ATP and magnesium. alpha-casein is the usual test substrate. In the absence of ATP, only oligopeptides shorter than five residues are hydrolyzed (such as succinyl-Leu-Tyr-|-NHMec, and Leu-Tyr-Leu-|-Tyr-Trp, in which cleavage of the -Tyr-|-Leu- and -Tyr-|-Trp bonds also occurs).. Functionally, cleaves peptides in various proteins in a process that requires ATP hydrolysis. Has a chymotrypsin-like activity. Plays a major role in the degradation of misfolded proteins. In Bacillus anthracis, this protein is ATP-dependent Clp protease proteolytic subunit 1.